The primary structure comprises 168 residues: MLVYQDKLSGDELLSDSFPYRELENGVLWEVDGHWVVQGAVDVDIGANPSAEGGGDDEGVDDQAVKVVDIVDTFRLQEQPAFDKKQFISHMKRYIKNLSAKLEGDDLDVFKKNVESATKYLLSKLKDLQFFVGESMHDDGGVVFAYYKEGAADPTFLYFAHGLKEVKC.

Positions methionine 1–cysteine 168 constitute a TCTP domain.

It belongs to the TCTP family.

The protein localises to the cytoplasm. Functionally, involved in calcium binding and microtubule stabilization. In Triticum aestivum (Wheat), this protein is Translationally-controlled tumor protein homolog (TCTP).